Consider the following 435-residue polypeptide: Adenylosuccinate synthetase (435 aa).

GTP-binding positions include glycine 11–lysine 17 and glycine 39–threonine 41. Residue aspartate 12 is the Proton acceptor of the active site. 2 residues coordinate Mg(2+): aspartate 12 and glycine 39. IMP-binding positions include aspartate 12–lysine 15, asparagine 37–histidine 40, threonine 134, arginine 148, asparagine 230, threonine 245, and arginine 309. The Proton donor role is filled by histidine 40. Valine 305–arginine 311 provides a ligand contact to substrate. Residues arginine 311, lysine 337–aspartate 339, and glycine 419–glycine 421 contribute to the GTP site.

Belongs to the adenylosuccinate synthetase family. In terms of assembly, homodimer. Mg(2+) is required as a cofactor.

The protein resides in the cytoplasm. It catalyses the reaction IMP + L-aspartate + GTP = N(6)-(1,2-dicarboxyethyl)-AMP + GDP + phosphate + 2 H(+). It functions in the pathway purine metabolism; AMP biosynthesis via de novo pathway; AMP from IMP: step 1/2. Its function is as follows. Plays an important role in the de novo pathway and in the salvage pathway of purine nucleotide biosynthesis. Catalyzes the first committed step in the biosynthesis of AMP from IMP. This chain is Adenylosuccinate synthetase, found in Zygosaccharomyces rouxii (strain ATCC 2623 / CBS 732 / NBRC 1130 / NCYC 568 / NRRL Y-229).